The following is a 211-amino-acid chain: MYQPDFPTVPFRLGLYPVVDSVAWIERLLEAGVRTIQLRIKDKRDEEVEADVIAAIALGRRYDARLFINDYWRLAIKHRAYGVHLGQEDLETTDLKAIQAAGLRLGVSTHDDMEIDVALAAKPSYIALGHVFPTQTKQMPSAPQGLAQLARHIDRLADYPTVAIGGISVERAPAVLATGVGSIAVVSAITQAADWRAATAQLLDIAGVGDE.

4-amino-2-methyl-5-(diphosphooxymethyl)pyrimidine-binding positions include 37 to 41 (QLRIK) and N69. 2 residues coordinate Mg(2+): D70 and D89. S108 provides a ligand contact to 4-amino-2-methyl-5-(diphosphooxymethyl)pyrimidine. 134–136 (TQT) serves as a coordination point for 2-[(2R,5Z)-2-carboxy-4-methylthiazol-5(2H)-ylidene]ethyl phosphate. K137 provides a ligand contact to 4-amino-2-methyl-5-(diphosphooxymethyl)pyrimidine. Residues G166 and 186–187 (VS) each bind 2-[(2R,5Z)-2-carboxy-4-methylthiazol-5(2H)-ylidene]ethyl phosphate.

It belongs to the thiamine-phosphate synthase family. Mg(2+) is required as a cofactor.

It carries out the reaction 2-[(2R,5Z)-2-carboxy-4-methylthiazol-5(2H)-ylidene]ethyl phosphate + 4-amino-2-methyl-5-(diphosphooxymethyl)pyrimidine + 2 H(+) = thiamine phosphate + CO2 + diphosphate. The catalysed reaction is 2-(2-carboxy-4-methylthiazol-5-yl)ethyl phosphate + 4-amino-2-methyl-5-(diphosphooxymethyl)pyrimidine + 2 H(+) = thiamine phosphate + CO2 + diphosphate. The enzyme catalyses 4-methyl-5-(2-phosphooxyethyl)-thiazole + 4-amino-2-methyl-5-(diphosphooxymethyl)pyrimidine + H(+) = thiamine phosphate + diphosphate. It functions in the pathway cofactor biosynthesis; thiamine diphosphate biosynthesis; thiamine phosphate from 4-amino-2-methyl-5-diphosphomethylpyrimidine and 4-methyl-5-(2-phosphoethyl)-thiazole: step 1/1. Condenses 4-methyl-5-(beta-hydroxyethyl)thiazole monophosphate (THZ-P) and 2-methyl-4-amino-5-hydroxymethyl pyrimidine pyrophosphate (HMP-PP) to form thiamine monophosphate (TMP). This Salmonella newport (strain SL254) protein is Thiamine-phosphate synthase.